The sequence spans 105 residues: Intermembrane phospholipid transport system binding protein MlaB (105 aa).

One can recognise an STAS domain in the interval 4–105 (WDLQKNNDKI…GLSDWIANFI (102 aa)).

The complex is composed of two ATP-binding proteins (MlaF), two transmembrane proteins (MlaE), two cytoplasmic solute-binding proteins (MlaB) and six periplasmic solute-binding proteins (MlaD).

Its subcellular location is the cytoplasm. Part of the ABC transporter complex MlaFEDB, which is involved in a phospholipid transport pathway that maintains lipid asymmetry in the outer membrane by retrograde trafficking of phospholipids from the outer membrane to the inner membrane. MlaB plays critical roles in both the assembly and activity of the complex. May act by modulating MlaF structure and stability. This is Intermembrane phospholipid transport system binding protein MlaB from Haemophilus influenzae (strain ATCC 51907 / DSM 11121 / KW20 / Rd).